The primary structure comprises 326 residues: ELMO domain-containing protein 1 (326 aa).

Residues 133-306 (QHEEMLLKLW…KFRKRIIKQL (174 aa)) enclose the ELMO domain.

Functionally, acts as a GTPase-activating protein (GAP) toward guanine nucleotide exchange factors like ARL2, ARL3, ARF1 and ARF6, but not for GTPases outside the Arf family. In Mus musculus (Mouse), this protein is ELMO domain-containing protein 1 (Elmod1).